A 408-amino-acid chain; its full sequence is LL-diaminopimelate aminotransferase (408 aa).

The substrate site is built by Y15 and G42. Pyridoxal 5'-phosphate contacts are provided by residues Y72, 108-109 (SK), Y132, N187, Y218, and 246-248 (SFS). Positions 109, 132, and 187 each coordinate substrate. At K249 the chain carries N6-(pyridoxal phosphate)lysine. 2 residues coordinate pyridoxal 5'-phosphate: R257 and N292. Positions 292 and 388 each coordinate substrate.

This sequence belongs to the class-I pyridoxal-phosphate-dependent aminotransferase family. LL-diaminopimelate aminotransferase subfamily. Homodimer. Pyridoxal 5'-phosphate is required as a cofactor.

The catalysed reaction is (2S,6S)-2,6-diaminopimelate + 2-oxoglutarate = (S)-2,3,4,5-tetrahydrodipicolinate + L-glutamate + H2O + H(+). It participates in amino-acid biosynthesis; L-lysine biosynthesis via DAP pathway; LL-2,6-diaminopimelate from (S)-tetrahydrodipicolinate (aminotransferase route): step 1/1. Involved in the synthesis of meso-diaminopimelate (m-DAP or DL-DAP), required for both lysine and peptidoglycan biosynthesis. Catalyzes the direct conversion of tetrahydrodipicolinate to LL-diaminopimelate. The protein is LL-diaminopimelate aminotransferase of Leptospira borgpetersenii serovar Hardjo-bovis (strain L550).